The primary structure comprises 577 residues: Arginine--tRNA ligase (577 aa).

The 'HIGH' region signature appears at 122-132 (PNVAKEMHVGH).

It belongs to the class-I aminoacyl-tRNA synthetase family. In terms of assembly, monomer.

Its subcellular location is the cytoplasm. The enzyme catalyses tRNA(Arg) + L-arginine + ATP = L-arginyl-tRNA(Arg) + AMP + diphosphate. The chain is Arginine--tRNA ligase from Enterobacter sp. (strain 638).